The following is an 87-amino-acid chain: Small ribosomal subunit protein bS20 (87 aa).

The protein belongs to the bacterial ribosomal protein bS20 family.

Functionally, binds directly to 16S ribosomal RNA. This chain is Small ribosomal subunit protein bS20, found in Brachyspira hyodysenteriae (strain ATCC 49526 / WA1).